The following is a 954-amino-acid chain: Leucine--tRNA ligase (954 aa).

The 'HIGH' region signature appears at 40–51; that stretch reads PYPSGAGLHVGH. The short motif at 729–733 is the 'KMSKS' region element; it reads KMSKS. Residue lysine 732 participates in ATP binding.

It belongs to the class-I aminoacyl-tRNA synthetase family.

It is found in the cytoplasm. The catalysed reaction is tRNA(Leu) + L-leucine + ATP = L-leucyl-tRNA(Leu) + AMP + diphosphate. The chain is Leucine--tRNA ligase from Flavobacterium johnsoniae (strain ATCC 17061 / DSM 2064 / JCM 8514 / BCRC 14874 / CCUG 350202 / NBRC 14942 / NCIMB 11054 / UW101) (Cytophaga johnsonae).